The chain runs to 312 residues: tRNA-dihydrouridine(16) synthase (312 aa).

Residues 7-9 (PME) and glutamine 68 each bind FMN. Cysteine 98 functions as the Proton donor in the catalytic mechanism. Residues lysine 139, 200-202 (NGE), and 224-225 (GR) contribute to the FMN site.

The protein belongs to the Dus family. DusC subfamily. It depends on FMN as a cofactor.

The enzyme catalyses 5,6-dihydrouridine(16) in tRNA + NADP(+) = uridine(16) in tRNA + NADPH + H(+). It catalyses the reaction 5,6-dihydrouridine(16) in tRNA + NAD(+) = uridine(16) in tRNA + NADH + H(+). In terms of biological role, catalyzes the synthesis of 5,6-dihydrouridine (D), a modified base found in the D-loop of most tRNAs, via the reduction of the C5-C6 double bond in target uridines. Specifically modifies U16 in tRNAs. The polypeptide is tRNA-dihydrouridine(16) synthase (Salmonella typhimurium (strain LT2 / SGSC1412 / ATCC 700720)).